Reading from the N-terminus, the 94-residue chain is Small ubiquitin-related modifier 3 (94 aa).

A Glycyl lysine isopeptide (Lys-Gly) (interchain with G-Cter in SUMO) cross-link involves residue Lys11. Residues 15–92 enclose the Ubiquitin-like domain; it reads DHINLKVAGQ…IDVFQQQTGG (78 aa). Gly92 participates in a covalent cross-link: Glycyl lysine isopeptide (Gly-Lys) (interchain with K-? in acceptor proteins). Residues 93 to 94 constitute a propeptide that is removed on maturation; the sequence is LC.

The protein belongs to the ubiquitin family. SUMO subfamily. As to quaternary structure, interacts with SAE2 and UBE2I. Covalently attached to a number of proteins. Post-translationally, polymeric chains can be formed through Lys-11 cross-linking. In terms of processing, cleavage of precursor form by a sentrin-specific protease is necessary for function.

The protein localises to the cytoplasm. The protein resides in the nucleus. It is found in the PML body. In terms of biological role, ubiquitin-like protein which can be covalently attached to target lysines either as a monomer or as a lysine-linked polymer. Does not seem to be involved in protein degradation and may function as an antagonist of ubiquitin in the degradation process. Plays a role in a number of cellular processes such as nuclear transport, DNA replication and repair, mitosis and signal transduction. Covalent attachment to its substrates requires prior activation by the E1 complex SAE1-SAE2 and linkage to the E2 enzyme UBE2I. The polypeptide is Small ubiquitin-related modifier 3 (Gallus gallus (Chicken)).